We begin with the raw amino-acid sequence, 386 residues long: Succinate--CoA ligase [ADP-forming] subunit beta (386 aa).

Positions 46, 99, 102, and 107 each coordinate ATP. Residues Asn199 and Asp213 each contribute to the Mg(2+) site. Residues Asn264 and 321-323 contribute to the substrate site; that span reads GIM.

This sequence belongs to the succinate/malate CoA ligase beta subunit family. As to quaternary structure, heterotetramer of two alpha and two beta subunits. It depends on Mg(2+) as a cofactor.

The catalysed reaction is succinate + ATP + CoA = succinyl-CoA + ADP + phosphate. The enzyme catalyses GTP + succinate + CoA = succinyl-CoA + GDP + phosphate. Its pathway is carbohydrate metabolism; tricarboxylic acid cycle; succinate from succinyl-CoA (ligase route): step 1/1. In terms of biological role, succinyl-CoA synthetase functions in the citric acid cycle (TCA), coupling the hydrolysis of succinyl-CoA to the synthesis of either ATP or GTP and thus represents the only step of substrate-level phosphorylation in the TCA. The beta subunit provides nucleotide specificity of the enzyme and binds the substrate succinate, while the binding sites for coenzyme A and phosphate are found in the alpha subunit. This is Succinate--CoA ligase [ADP-forming] subunit beta from Orientia tsutsugamushi (strain Boryong) (Rickettsia tsutsugamushi).